The sequence spans 202 residues: MPKVGMQPIRRRQLIDATLSTINDVGINDATIAQIARRAGVSAGIISHYFKDKNGLLEATMRDITRQLRDAVAARLRPLAQASTEARLLAIVEGNFDDTQVHSAAMKAWLDFWASSMHQPQLGRLERVSSRRLFSTLAAEFRRELPREQARLAAHGLASLIDGLWLRAALSGQPFNLETARTLTTQFIRQQLAGAAPHEKEE.

Positions 8–68 constitute an HTH tetR-type domain; it reads PIRRRQLIDA…ATMRDITRQL (61 aa). Positions 31-50 form a DNA-binding region, H-T-H motif; it reads TIAQIARRAGVSAGIISHYF.

Its pathway is amine and polyamine biosynthesis; betaine biosynthesis via choline pathway [regulation]. In terms of biological role, repressor involved in the biosynthesis of the osmoprotectant glycine betaine. It represses transcription of the choline transporter BetT and the genes of BetAB involved in the synthesis of glycine betaine. This Cronobacter sakazakii (strain ATCC BAA-894) (Enterobacter sakazakii) protein is HTH-type transcriptional regulator BetI.